A 280-amino-acid chain; its full sequence is UPF0273 protein SSO1861 (280 aa).

The KaiC domain maps to Lys-2–Ser-246. Gly-29 to Ser-36 serves as a coordination point for ATP.

Belongs to the UPF0273 family.

The chain is UPF0273 protein SSO1861 from Saccharolobus solfataricus (strain ATCC 35092 / DSM 1617 / JCM 11322 / P2) (Sulfolobus solfataricus).